The sequence spans 164 residues: Transmembrane protein B169L (164 aa).

Transmembrane regions (helical) follow at residues 28–48 and 60–80; these read NPFIVALIITAVVLVVFFAIC and TAIYIYICIVALLFLHYYVLN. Asn88 is a glycosylation site (N-linked (GlcNAc...) asparagine; by host). The interval 114 to 142 is disordered; it reads SPPSVPDELEEDRPKMIPAGSKPADFKPA.

The protein belongs to the asfivirus B169L family.

Its subcellular location is the host membrane. The protein localises to the virion. The polypeptide is Transmembrane protein B169L (Ornithodoros (relapsing fever ticks)).